A 287-amino-acid polypeptide reads, in one-letter code: 1-acyl-sn-glycerol-3-phosphate acyltransferase alpha (287 aa).

Residues 1 to 26 (MELWPGAGTLLLLLFLLLLLLLPTLW) form the signal peptide. At 27–37 (FCSPSAKYFFK) the chain is on the lumenal side. A helical membrane pass occupies residues 38 to 58 (MAFYNGWILFLAVLAIPVCAV). Residues 59-127 (RGRNVENMKI…PGRCVPIAKR (69 aa)) are Cytoplasmic-facing. Positions 104–109 (HQSSLD) match the HXXXXD motif motif. The chain crosses the membrane as a helical span at residues 128 to 148 (ELLWAGSAGLACWLAGVIFID). The Lumenal portion of the chain corresponds to 149–287 (RKRTGDAISV…KPGGVGEAGL (139 aa)). The EGTR motif motif lies at 178-181 (EGTR).

It belongs to the 1-acyl-sn-glycerol-3-phosphate acyltransferase family.

It is found in the endoplasmic reticulum membrane. The catalysed reaction is a 1-acyl-sn-glycero-3-phosphate + an acyl-CoA = a 1,2-diacyl-sn-glycero-3-phosphate + CoA. The enzyme catalyses 1-(9Z-octadecenoyl)-sn-glycero-3-phosphate + (9Z)-octadecenoyl-CoA = 1,2-di-(9Z-octadecenoyl)-sn-glycero-3-phosphate + CoA. It carries out the reaction 1-(9Z-octadecenoyl)-sn-glycero-3-phosphate + hexadecanoyl-CoA = 1-(9Z)-octadecenoyl-2-hexadecanoyl-sn-glycero-3-phosphate + CoA. It catalyses the reaction heptadecanoyl-CoA + 1-(9Z-octadecenoyl)-sn-glycero-3-phosphate = 1-(9Z)-octadecenoyl-2-heptadecanoyl-sn-glycero-3-phosphate + CoA. The catalysed reaction is 1-(9Z-octadecenoyl)-sn-glycero-3-phosphate + octadecanoyl-CoA = 1-(9Z-octadecenoyl)-2-octadecanoyl-sn-glycero-3-phosphate + CoA. The enzyme catalyses 1-(9Z-octadecenoyl)-sn-glycero-3-phosphate + (9Z,12Z)-octadecadienoyl-CoA = 1-(9Z)-octadecenoyl-2-(9Z,12Z)-octadecadienoyl-sn-glycero-3-phosphate + CoA. It carries out the reaction 1-(9Z-octadecenoyl)-sn-glycero-3-phosphate + tetradecanoyl-CoA = 1-(9Z)-octadecenoyl-2-tetradecanoyl-sn-glycero-3-phosphate + CoA. It catalyses the reaction pentadecanoyl-CoA + 1-(9Z-octadecenoyl)-sn-glycero-3-phosphate = 1-(9Z)-octadecenoyl-2-pentadecanoyl-sn-glycero-3-phosphate + CoA. The catalysed reaction is 1-hexadecanoyl-sn-glycero-3-phosphate + (9Z)-octadecenoyl-CoA = 1-hexadecanoyl-2-(9Z-octadecenoyl)-sn-glycero-3-phosphate + CoA. The enzyme catalyses 1-(9Z,12Z,15Z)-octadecatrienoyl-sn-glycero-3-phosphate + (9Z)-octadecenoyl-CoA = 1-(9Z,12Z,15Z)-octadecatrienoyl-2-(9Z)-octadecenoyl-sn-glycero-3-phosphate + CoA. It carries out the reaction 1-(6Z,9Z,12Z-octadecatrienoyl)-sn-glycero-3-phosphate + (9Z)-octadecenoyl-CoA = (6Z,9Z,12Z)-octadecatrienoyl-2-(9Z)-octadecenoyl-sn-glycero-3-phosphate + CoA. It catalyses the reaction 1-eicosanoyl-sn-glycero-3-phosphate + (9Z)-octadecenoyl-CoA = 1-eicosanoyl-2-(9Z)-octadecenoyl-sn-glycero-3-phosphate + CoA. The catalysed reaction is 1-tetradecanoyl-sn-glycerol 3-phosphate + (9Z)-octadecenoyl-CoA = 1-tetradecanoyl-2-(9Z)-octadecenoyl-sn-glycero-3-phosphate + CoA. The enzyme catalyses 1-(9Z-octadecenoyl)-sn-glycero-3-phosphate + (5Z,8Z,11Z,14Z)-eicosatetraenoyl-CoA = 1-(9Z)-octadecenoyl-2-(5Z,8Z,11Z,14Z)-eicosatetraenoyl-sn-glycero-3-phosphate + CoA. It carries out the reaction 1-(9Z-octadecenoyl)-sn-glycero-3-phosphate + dodecanoyl-CoA = 1-(9Z)-octadecenoyl-2-dodecanoyl-sn-glycero-3-phosphate + CoA. It catalyses the reaction (6Z)-octadecenoyl-CoA + 1-(9Z-octadecenoyl)-sn-glycero-3-phosphate = 1-(9Z)-octadecenoyl-2-(6Z)-octadecenoyl-sn-glycero-3-phosphate + CoA. The catalysed reaction is (11Z)-octadecenoyl-CoA + 1-(9Z-octadecenoyl)-sn-glycero-3-phosphate = 1-(9Z)-octadecenoyl-2-(11Z)-octadecenoyl-sn-glycero-3-phosphate + CoA. The enzyme catalyses (9Z)-hexadecenoyl-CoA + 1-(9Z-octadecenoyl)-sn-glycero-3-phosphate = 1-(9Z-octadecenoyl)-2-(9Z-hexadecenoyl)-sn-glycero-3-phosphate + CoA. The protein operates within phospholipid metabolism; CDP-diacylglycerol biosynthesis; CDP-diacylglycerol from sn-glycerol 3-phosphate: step 2/3. Converts 1-acyl-sn-glycerol-3-phosphate (lysophosphatidic acid or LPA) into 1,2-diacyl-sn-glycerol-3-phosphate (phosphatidic acid or PA) by incorporating an acyl moiety at the sn-2 position of the glycerol backbone. The polypeptide is 1-acyl-sn-glycerol-3-phosphate acyltransferase alpha (AGPAT1) (Bos taurus (Bovine)).